Reading from the N-terminus, the 992-residue chain is Vacuolar membrane protease (992 aa).

Residues 1–24 (MSPAMANPRVRKFNPIAFTPLPVT) lie on the Cytoplasmic side of the membrane. Residues 25–45 (FITTIVYLAVLILVLVTYLVV) form a helical membrane-spanning segment. Over 46–390 (PPAPTLEMSP…SAFAVFRLHT (345 aa)) the chain is Vacuolar. N-linked (GlcNAc...) asparagine glycosylation is found at Asn59, Asn115, and Asn118. The Zn(2+) site is built by His174 and Asp186. Residue Glu220 is the Proton acceptor of the active site. Glu221 lines the Zn(2+) pocket. Asn237 is a glycosylation site (N-linked (GlcNAc...) asparagine). Zn(2+) contacts are provided by Glu246 and His319. Residues 391–411 (LFALSVTLLVIGPLVLFITSI) form a helical membrane-spanning segment. Over 412–446 (ALSKTDRMYLFSMSKSLGGASETVSLRGLRGLFRT) the chain is Cytoplasmic. Residues 447 to 467 (PIILTVTTVISIGLAYLLEKI) form a helical membrane-spanning segment. Over 468–474 (NPYIVHS) the chain is Vacuolar. A helical membrane pass occupies residues 475–495 (SQFAVWSMMLSVWIFVAWFLA). The Cytoplasmic portion of the chain corresponds to 496–508 (RVADFFRPSALHR). Residues 509 to 529 (AYSYTWIFIVTWIMLVISTVY) traverse the membrane as a helical segment. Topologically, residues 530-533 (ANQK) are vacuolar. Residues 534-554 (GIAAGYFTFFYFAAVFLATWV) traverse the membrane as a helical segment. The Cytoplasmic segment spans residues 555–671 (SYLELFSLPR…WSWTLPRWTW (117 aa)). The interval 579–620 (RSSSLSSRLLTPSADELPSDIGPNGAENVGDPDETDPTESTS) is disordered. Residues 672 to 692 (ILQLLLLAPIVIILVGQVGLL) form a helical membrane-spanning segment. The Vacuolar segment spans residues 693-708 (LTTAMSQIGSDGVSTF). A helical membrane pass occupies residues 709–729 (IVYLACALFSTLLFAPLLPFI). Residues 730–736 (HRFTYHV) are Cytoplasmic-facing. The chain crosses the membrane as a helical span at residues 737-757 (PIFLLLIFIGTLIYNLVAFPF). The Vacuolar segment spans residues 758–992 (SPANRLKIFF…VEASHDFIIQ (235 aa)). Asn805, Asn846, and Asn954 each carry an N-linked (GlcNAc...) asparagine glycan.

Belongs to the peptidase M28 family. Zn(2+) is required as a cofactor.

It localises to the vacuole membrane. Functionally, may be involved in vacuolar sorting and osmoregulation. The polypeptide is Vacuolar membrane protease (Paracoccidioides brasiliensis (strain Pb18)).